The primary structure comprises 1061 residues: Chimeric ERCC6-PGBD3 protein (1061 aa).

Residues 1–39 are disordered; it reads MPNEGIPHSSQTQEQDCLQSQPVSNNEEMAIKQESGGDG. The span at 8 to 27 shows a compositional bias: polar residues; that stretch reads HSSQTQEQDCLQSQPVSNNE. Position 158 is a phosphoserine (Ser-158). Residue Lys-255 forms a Glycyl lysine isopeptide (Lys-Gly) (interchain with G-Cter in SUMO2) linkage. Disordered regions lie at residues 287 to 323, 344 to 466, 494 to 521, and 537 to 573; these read KQGC…VLSK, GKVG…QRLS, VIQP…INNL, and SDAE…SRRR. A compositionally biased stretch (basic and acidic residues) spans 353 to 363; the sequence is RPWESDMRPEA. Over residues 364–392 the composition is skewed to acidic residues; the sequence is EGDSEGEESEYFPTEEEEEEEDDEVEGAE. Phosphoserine is present on residues Ser-429 and Ser-430. Basic and acidic residues predominate over residues 451-462; it reads RYRDDGDEDYYK. Residues 506-515 show a composition bias toward acidic residues; it reads SDEESGDEEG. The residue at position 554 (Ser-554) is a Phosphoserine.

As to expression, expressed in heart and oocytes, but not in granulosa cells (at protein level).

It localises to the nucleus. Its function is as follows. Involved in repair of DNA damage following UV irradiation, acting either in the absence of ERCC6 or synergistically with ERCC6. Involved in the regulation of gene expression. In the absence of ERCC6, induces the expression of genes characteristic of interferon-like antiviral responses. This response is almost completely suppressed in the presence of ERCC6. In the presence of ERCC6, regulates the expression of genes involved in metabolism regulation, including IGFBP5 and IGFBP7. In vitro binds to PGBD3-related transposable elements, called MER85s; these non-autonomous 140 bp elements are characterized by the presence of PGBD3 terminal inverted repeats and the absence of internal transposase ORF. The sequence is that of Chimeric ERCC6-PGBD3 protein from Homo sapiens (Human).